The chain runs to 76 residues: Defensin-like protein 155 (76 aa).

Residues 1 to 27 (MAKISCSYLLILMLALSVFSVVEKAKG) form the signal peptide. 4 cysteine pairs are disulfide-bonded: Cys-31/Cys-76, Cys-40/Cys-59, Cys-45/Cys-70, and Cys-49/Cys-72.

The protein belongs to the DEFL family.

Its subcellular location is the secreted. This is Defensin-like protein 155 (LCR36) from Arabidopsis thaliana (Mouse-ear cress).